Reading from the N-terminus, the 116-residue chain is MRHQLRVPKLGRPADQRKAILRGLTTQLIREGRVTTTKAKAKALRNEAERMITLAKEGTLAARRRAIGYIYDKKLVHQLFEKAQDRYGDREGGYTRIVRTVPRRGDNAEMAIIELV.

The protein belongs to the bacterial ribosomal protein bL17 family. As to quaternary structure, part of the 50S ribosomal subunit. Contacts protein L32.

This is Large ribosomal subunit protein bL17 from Prochlorococcus marinus (strain MIT 9211).